Here is a 62-residue protein sequence, read N- to C-terminus: Defensin BmKDfsin6 (62 aa).

An N-terminal signal peptide occupies residues 1 to 24 (MKVIAILFLLAFVLCTMEITMVEA). Disulfide bonds link Cys28/Cys49, Cys35/Cys57, and Cys39/Cys59.

Belongs to the invertebrate defensin family. Type 2 subfamily. As to expression, highly expressed in non-venom gland (hemolymph) and moderately expressed in venom gland.

It is found in the secreted. Antibacterial peptide active against Gram-positive bacteria, but not on Gram-negative bacteria. Also has weak blocking activity on Kv1.1/KCNA1, Kv1.2/KCNA2, Kv1.3/KCNA3, KCa3.1/KCNN4/IK, KCa2.3/KCNN3/SK3 and Kv11.1/KCNH2/ERG1 channels (tested at 1 uM). It inhibits potassium channel current by interacting with the pore region. In Olivierus martensii (Manchurian scorpion), this protein is Defensin BmKDfsin6.